A 172-amino-acid polypeptide reads, in one-letter code: Adenine phosphoribosyltransferase (172 aa).

The protein belongs to the purine/pyrimidine phosphoribosyltransferase family. Homodimer.

The protein localises to the cytoplasm. It catalyses the reaction AMP + diphosphate = 5-phospho-alpha-D-ribose 1-diphosphate + adenine. It participates in purine metabolism; AMP biosynthesis via salvage pathway; AMP from adenine: step 1/1. Its function is as follows. Catalyzes a salvage reaction resulting in the formation of AMP, that is energically less costly than de novo synthesis. The sequence is that of Adenine phosphoribosyltransferase from Clostridium tetani (strain Massachusetts / E88).